Reading from the N-terminus, the 739-residue chain is ABC transporter G family member 20 (739 aa).

In terms of domain architecture, ABC transporter spans 88-351; it reads LSFKDLTYSV…FSEFGHPIPE (264 aa). Residue 144–151 participates in ATP binding; the sequence is GASGSGKS. Residues 433–643 form the ABC transmembrane type-2 domain; it reads TEMLVIGKRS…PYEGVLQNEF (211 aa). A run of 6 helical transmembrane segments spans residues 452 to 472, 487 to 507, 528 to 548, 563 to 583, 593 to 613, and 712 to 732; these read LFGIRLGAVLVTGMILATIFW, FFAFAMSTTFYTCAEAIPVFL, VLAHTIISIPALIILSAAFAA, FLFFFFTILTAFWAGSSFVTF, IGFTVVVAILAYFLLFSGFFI, and LWITVAWGFFFRVLFYFTLLI.

Belongs to the ABC transporter superfamily. ABCG family. Eye pigment precursor importer (TC 3.A.1.204) subfamily.

Its subcellular location is the membrane. This is ABC transporter G family member 20 (ABCG20) from Arabidopsis thaliana (Mouse-ear cress).